Reading from the N-terminus, the 167-residue chain is Single-stranded DNA-binding protein 2 (167 aa).

The 104-residue stretch at 1–104 (MLNRVVLVGR…VVCDSVQFLE (104 aa)) folds into the SSB domain. Residues 107-167 (NAQQNGGQRQ…IDISDDDLPF (61 aa)) are disordered. Composition is skewed to low complexity over residues 109–118 (QQNGGQRQQN) and 132–147 (SGQN…TKQS). The Important for interaction with partner proteins motif lies at 162–167 (DDDLPF).

Homotetramer.

Its function is as follows. Plays an important role in DNA replication, recombination and repair. Binds to ssDNA and to an array of partner proteins to recruit them to their sites of action during DNA metabolism. The chain is Single-stranded DNA-binding protein 2 (ssb2) from Staphylococcus aureus (strain MSSA476).